A 399-amino-acid chain; its full sequence is Subtilisin-like protease CPC735_033790 (399 aa).

The N-terminal stretch at Met-1–Ala-20 is a signal peptide. The propeptide occupies Gly-21–Thr-117. The region spanning Ser-37–Ile-116 is the Inhibitor I9 domain. N-linked (GlcNAc...) asparagine glycosylation is present at Asn-115. The Peptidase S8 domain occupies Ser-127–Val-399. Residues Asp-159 and His-190 each act as charge relay system in the active site. Residue Asn-251 is glycosylated (N-linked (GlcNAc...) asparagine). Catalysis depends on Ser-345, which acts as the Charge relay system. Asn-395 carries N-linked (GlcNAc...) asparagine glycosylation.

The protein belongs to the peptidase S8 family.

It is found in the secreted. Secreted subtilisin-like serine protease with keratinolytic activity that contributes to pathogenicity. The chain is Subtilisin-like protease CPC735_033790 from Coccidioides posadasii (strain C735) (Valley fever fungus).